We begin with the raw amino-acid sequence, 518 residues long: Glutamate--cysteine ligase (518 aa).

The protein belongs to the glutamate--cysteine ligase type 1 family. Type 1 subfamily.

The catalysed reaction is L-cysteine + L-glutamate + ATP = gamma-L-glutamyl-L-cysteine + ADP + phosphate + H(+). It functions in the pathway sulfur metabolism; glutathione biosynthesis; glutathione from L-cysteine and L-glutamate: step 1/2. This is Glutamate--cysteine ligase from Salmonella gallinarum (strain 287/91 / NCTC 13346).